Consider the following 133-residue polypeptide: uncharacterized protein (133 aa).

The protein belongs to the mimivirus L15/L51/R83 family.

This is an uncharacterized protein from Acanthamoeba polyphaga (Amoeba).